A 124-amino-acid chain; its full sequence is Ribonuclease pancreatic (124 aa).

Over residues 1 to 13 the composition is skewed to basic and acidic residues; the sequence is KETAAAKFERQHM. Residues 1–24 are disordered; it reads KETAAAKFERQHMDSSTSSASSSN. Residues K7 and R10 each coordinate substrate. H12 functions as the Proton acceptor in the catalytic mechanism. 4 cysteine pairs are disulfide-bonded: C26/C84, C40/C95, C58/C110, and C65/C72. Substrate contacts are provided by residues 41–45, K66, and R85; that span reads KPVBT. H119 (proton donor) is an active-site residue.

The protein belongs to the pancreatic ribonuclease family. In terms of assembly, monomer. Interacts with and forms tight 1:1 complexes with RNH1. Dimerization of two such complexes may occur. Interaction with RNH1 inhibits this protein. As to expression, pancreas.

The protein localises to the secreted. The catalysed reaction is an [RNA] containing cytidine + H2O = an [RNA]-3'-cytidine-3'-phosphate + a 5'-hydroxy-ribonucleotide-3'-[RNA].. It carries out the reaction an [RNA] containing uridine + H2O = an [RNA]-3'-uridine-3'-phosphate + a 5'-hydroxy-ribonucleotide-3'-[RNA].. In terms of biological role, endonuclease that catalyzes the cleavage of RNA on the 3' side of pyrimidine nucleotides. Acts on single-stranded and double-stranded RNA. The sequence is that of Ribonuclease pancreatic (RNASE1) from Boselaphus tragocamelus (Nilgai).